Reading from the N-terminus, the 657-residue chain is uncharacterized protein (657 aa).

Positions M1–S26 are cleaved as a signal peptide. A lipid anchor (N-palmitoyl cysteine) is attached at C27. Residue C27 is the site of S-diacylglycerol cysteine attachment. Disordered regions lie at residues I291–T316, R468–I496, and K516–N563. Residues K294–S304 show a composition bias toward polar residues. The segment covering L469–I495 has biased composition (basic and acidic residues). Positions K516–T525 are enriched in polar residues. A compositionally biased stretch (basic and acidic residues) spans E526–G545. Residues K546–G559 are compositionally biased toward low complexity.

To T.pallidum TmpC.

It is found in the cell membrane. This is an uncharacterized protein from Mycoplasma pneumoniae (strain ATCC 29342 / M129 / Subtype 1) (Mycoplasmoides pneumoniae).